Consider the following 333-residue polypeptide: G-protein coupled receptor 146 (333 aa).

Topologically, residues 1–22 are extracellular; it reads MWSCGPLNSTAWAEEPLCRNLR. N-linked (GlcNAc...) asparagine glycosylation occurs at N8. The chain crosses the membrane as a helical span at residues 23–43; that stretch reads LGLWVLSLLYLGAGVPVSLGY. Over 44 to 64 the chain is Cytoplasmic; sequence NALLVLANLASKNTMTMPDVY. The helical transmembrane segment at 65 to 85 threads the bilayer; that stretch reads FVNMAVAGLVLTALAPAYLLG. At 86–101 the chain is on the extracellular side; the sequence is PAHSRWALWSLSSEAH. The chain crosses the membrane as a helical span at residues 102 to 122; sequence VTLLILFNVASLVTMYSTALL. The Cytoplasmic portion of the chain corresponds to 123 to 145; it reads SLDYYIERALPRTYMASVYNTRH. Residues 146–166 traverse the membrane as a helical segment; the sequence is VCGFVWGGAVLTSFSSLLFYI. Over 167-188 the chain is Extracellular; that stretch reads CSHVSSRIAECARMQNTEAADA. Residues 189 to 209 traverse the membrane as a helical segment; sequence ILVLIGYVVPGLAVLYALALI. The Cytoplasmic segment spans residues 210–232; sequence SRIGKEDTPLDQDTSRLDPSVHR. Residues 233 to 253 traverse the membrane as a helical segment; sequence LLVATVCTQFGLWTPYYLSLG. Topologically, residues 254-277 are extracellular; that stretch reads HTVLTSRGRTVEGHYLGILQVAKD. A helical membrane pass occupies residues 278–298; that stretch reads LAKFLAFSSSSVTPLLYRYIN. At 299-333 the chain is on the cytoplasmic side; it reads KAFPGKLRRLMKKMHCGRRHCSPDPSGIQQVMAQA.

The protein belongs to the G-protein coupled receptor 1 family.

The protein localises to the cell membrane. Functionally, GPCR receptor required for the regulation of plasma cholesterol levels. Receptor for CHLSN, a gut derived hormone which mediates an inhibitory effect of intestinal cholesterol absorption on hepatic cholesterol synthesis. Cholesin-binding exerts an antagonistic effect by inhibiting PKA signaling and suppressing SREBF2-controlled cholesterol in the liver. This Mus musculus (Mouse) protein is G-protein coupled receptor 146 (Gpr146).